Consider the following 202-residue polypeptide: Transcriptional regulator GfcR 2 (202 aa).

This sequence belongs to the purine/pyrimidine phosphoribosyltransferase family. GfcR subfamily.

The polypeptide is Transcriptional regulator GfcR 2 (Methanosarcina barkeri (strain Fusaro / DSM 804)).